The sequence spans 82 residues: U-actitoxin-Oulsp2 (82 aa).

The signal sequence occupies residues 1 to 21 (MNTKLVVVFLLSAILFVSVTA). Positions 22-46 (SRPGKDLERDEAYETYDDERPYFKR) are excised as a propeptide. A ShKT domain is found at 48–82 (CKDNLPAATCSNVKANNNCSSEKYKTNCAKTCGEC). Disulfide bonds link C48/C82, C57/C75, and C66/C79. Positions 70-71 (KY) are theoritically crucial for binding to potassium channels.

This sequence belongs to the sea anemone type 1 potassium channel toxin family. Type 1b subfamily.

The protein resides in the secreted. It localises to the nematocyst. Probable toxin with unknown function. In contrast to similar toxins, this toxin does not inhibit voltage-gated potassium channels (tested at 100 nM). Does not show antimicrobial activities against bacteria and yeasts. This Oulactis sp. (Sea anemone) protein is U-actitoxin-Oulsp2.